The primary structure comprises 317 residues: Transaldolase (317 aa).

Lys126 acts as the Schiff-base intermediate with substrate in catalysis.

This sequence belongs to the transaldolase family. Type 1 subfamily. Homodimer.

The protein resides in the cytoplasm. It catalyses the reaction D-sedoheptulose 7-phosphate + D-glyceraldehyde 3-phosphate = D-erythrose 4-phosphate + beta-D-fructose 6-phosphate. The protein operates within carbohydrate degradation; pentose phosphate pathway; D-glyceraldehyde 3-phosphate and beta-D-fructose 6-phosphate from D-ribose 5-phosphate and D-xylulose 5-phosphate (non-oxidative stage): step 2/3. In terms of biological role, transaldolase is important for the balance of metabolites in the pentose-phosphate pathway. The sequence is that of Transaldolase from Burkholderia pseudomallei (strain 1710b).